Reading from the N-terminus, the 531-residue chain is MADAAEGEQPKLSKKELNKLARKAKKDEKAGEKGGNQQQAAAMDQEDASKDFYGSYGLVNSKEKKVLNFLKVKEINVSNATKDVWVRGRIHTTRSKGKNCFLVLRQGVYTVQVAMFMNEKISKQMLKFVSSISKESIVDVYATINKVDNPIESCTQKDVELLAQQVFVVSTSAPKLPLQIEDASRRAPTDEEKASEQENQLAVVNLDTRLDNRVIDLRTPTSHAIFRIQAGICNQFRNILDVRGFVEIMAPKIISAPSEGGANVFEVSYFKGSAYLAQSPQLYKQMAIAGDFEKVYTIGPVFRAEDSNTHRHMTEFVGLDLEMAFNFHYHEVMETIAEVLTQMFKGLQQNYQDEIAAVGNQYPAEPFQFCEPPLILKYPDAITLLRENGIEIGDEDDLSTPVEKFLGKLVKEKYSTDFYVLDKFPLSVRPFYTMPDAHDERYSNSYDMFMRGEEILSGAQRIHDADMLVERAKHHQVDLAKIQSYIDSFKYGCPPHAGGGIGLERVTMLFLGLHNIRLASLFPRDPKRLTP.

A disordered region spans residues 1–45 (MADAAEGEQPKLSKKELNKLARKAKKDEKAGEKGGNQQQAAAMDQ). Residues 8 to 32 (EQPKLSKKELNKLARKAKKDEKAGE) are compositionally biased toward basic and acidic residues. Residue Glu-259 coordinates L-aspartate. Positions 281–284 (QLYK) are aspartate. Arg-303 provides a ligand contact to L-aspartate. ATP-binding positions include 303–305 (RAE), 311–313 (RHM), and Glu-454. 2 residues coordinate L-aspartate: Ser-457 and Arg-461. 502-505 (GLER) is a binding site for ATP.

It belongs to the class-II aminoacyl-tRNA synthetase family. Type 2 subfamily. As to quaternary structure, homodimer.

It is found in the cytoplasm. It carries out the reaction tRNA(Asp) + L-aspartate + ATP = L-aspartyl-tRNA(Asp) + AMP + diphosphate. The chain is Aspartate--tRNA ligase, cytoplasmic from Caenorhabditis elegans.